We begin with the raw amino-acid sequence, 225 residues long: UPF0758 protein XOO0462 (225 aa).

The region spanning 102–224 (ALSDPPSVGR…PVSLAERGWL (123 aa)) is the MPN domain. His-173, His-175, and Asp-186 together coordinate Zn(2+). Positions 173–186 (HNHPSGNPEPSEAD) match the JAMM motif motif.

This sequence belongs to the UPF0758 family.

This is UPF0758 protein XOO0462 from Xanthomonas oryzae pv. oryzae (strain MAFF 311018).